Here is an 817-residue protein sequence, read N- to C-terminus: Protein-glutamine gamma-glutamyltransferase K (817 aa).

2 disordered regions span residues 1-38 (MMDG…SRRG) and 59-105 (DDWG…DGTI). Positions 1 to 100 (MMDGPRSDVG…VSRGSGVNAA (100 aa)) are membrane anchorage region. Residues 17-26 (LQPPTTPSPE) are compositionally biased toward pro residues. Phosphothreonine is present on Thr22. Residues Ser24, Ser68, Ser82, Ser85, Ser92, and Ser95 each carry the phosphoserine modification. The segment covering 71-84 (RGSSSGTRRPGSRG) has biased composition (low complexity). Active-site residues include Cys377, His436, and Asp459. Ca(2+) is bound by residues Asn499, Asp501, Glu548, and Glu553. A disordered region spans residues 793 to 817 (GGFFSDAGGDSHLGETIPMASRGGA).

It belongs to the transglutaminase superfamily. Transglutaminase family. As to quaternary structure, interacts with PLAAT4. It depends on Ca(2+) as a cofactor. In terms of processing, palmitoylated. Post-translationally, the membrane anchorage region possesses a cluster of five cysteines within which fatty acid(s) may become thioester-linked. It is subject to phorbol ester-stimulated phosphorylation and is hypersensitive to proteolysis, which releases the enzyme in a soluble form. Tyrosine-phosphorylated.

It localises to the membrane. The enzyme catalyses L-glutaminyl-[protein] + L-lysyl-[protein] = [protein]-L-lysyl-N(6)-5-L-glutamyl-[protein] + NH4(+). Its function is as follows. Catalyzes the cross-linking of proteins and the conjugation of polyamines to proteins. Responsible for cross-linking epidermal proteins during formation of the stratum corneum. Involved in cell proliferation. This Homo sapiens (Human) protein is Protein-glutamine gamma-glutamyltransferase K (TGM1).